The following is a 464-amino-acid chain: Probable acid phosphatase DDB_G0284753 (464 aa).

A disordered region spans residues 1 to 29 (MFSYFRKSQQKVEENQNGGGGDGRGSGIK). Residues 17–26 (NGGGGDGRGS) show a composition bias toward gly residues. His-81 (nucleophile) is an active-site residue. Positions 180–202 (SFTDEQEKSPHHSSFLVKPDNEE) are disordered. Catalysis depends on Asp-347, which acts as the Proton donor.

This sequence belongs to the histidine acid phosphatase family.

It catalyses the reaction a phosphate monoester + H2O = an alcohol + phosphate. In Dictyostelium discoideum (Social amoeba), this protein is Probable acid phosphatase DDB_G0284753.